Here is a 486-residue protein sequence, read N- to C-terminus: Phosphomethylpyrimidine synthase (486 aa).

Substrate contacts are provided by residues asparagine 80, methionine 109, tyrosine 139, histidine 175, 195–197 (SRG), 236–239 (DSLR), and glutamate 275. Histidine 279 lines the Zn(2+) pocket. Position 329 (tyrosine 329) interacts with substrate. Histidine 370 lines the Zn(2+) pocket. Residues cysteine 450, cysteine 453, and cysteine 458 each contribute to the [4Fe-4S] cluster site.

It belongs to the ThiC family. It depends on [4Fe-4S] cluster as a cofactor.

It carries out the reaction 5-amino-1-(5-phospho-beta-D-ribosyl)imidazole + S-adenosyl-L-methionine = 4-amino-2-methyl-5-(phosphooxymethyl)pyrimidine + CO + 5'-deoxyadenosine + formate + L-methionine + 3 H(+). It functions in the pathway cofactor biosynthesis; thiamine diphosphate biosynthesis. Functionally, catalyzes the synthesis of the hydroxymethylpyrimidine phosphate (HMP-P) moiety of thiamine from aminoimidazole ribotide (AIR) in a radical S-adenosyl-L-methionine (SAM)-dependent reaction. This Trichodesmium erythraeum (strain IMS101) protein is Phosphomethylpyrimidine synthase.